A 126-amino-acid chain; its full sequence is RutC family protein y4sK (126 aa).

This sequence belongs to the RutC family.

The chain is RutC family protein y4sK from Sinorhizobium fredii (strain NBRC 101917 / NGR234).